The chain runs to 578 residues: Acyl-coenzyme A synthetase ACSM5, mitochondrial (578 aa).

A mitochondrion-targeting transit peptide spans 1 to 22; sequence MRLWLRGLACQALRSSWGVCRI. An N6-acetyllysine; alternate modification is found at K96. K96 carries the N6-succinyllysine; alternate modification. K151 carries the N6-acetyllysine modification. Position 229–237 (229–237) interacts with ATP; it reads TSGTTGAPK. K302 carries the N6-acetyllysine; alternate modification. K302 carries the post-translational modification N6-succinyllysine; alternate. Residue K335 is modified to N6-acetyllysine. Residues 367 to 372, D454, R469, and K565 each bind ATP; that span reads EGYGQS.

It belongs to the ATP-dependent AMP-binding enzyme family. Mg(2+) is required as a cofactor. Requires Mn(2+) as cofactor.

Its subcellular location is the mitochondrion matrix. The catalysed reaction is a medium-chain fatty acid + ATP + CoA = a medium-chain fatty acyl-CoA + AMP + diphosphate. In terms of biological role, catalyzes the activation of fatty acids by CoA to produce an acyl-CoA, the first step in fatty acid metabolism. The protein is Acyl-coenzyme A synthetase ACSM5, mitochondrial (Acsm5) of Mus musculus (Mouse).